Reading from the N-terminus, the 229-residue chain is UPF0173 metal-dependent hydrolase SERP1270 (229 aa).

It belongs to the UPF0173 family.

The chain is UPF0173 metal-dependent hydrolase SERP1270 from Staphylococcus epidermidis (strain ATCC 35984 / DSM 28319 / BCRC 17069 / CCUG 31568 / BM 3577 / RP62A).